A 477-amino-acid polypeptide reads, in one-letter code: Aspartyl/glutamyl-tRNA(Asn/Gln) amidotransferase subunit B (477 aa).

This sequence belongs to the GatB/GatE family. GatB subfamily. In terms of assembly, heterotrimer of A, B and C subunits.

The catalysed reaction is L-glutamyl-tRNA(Gln) + L-glutamine + ATP + H2O = L-glutaminyl-tRNA(Gln) + L-glutamate + ADP + phosphate + H(+). The enzyme catalyses L-aspartyl-tRNA(Asn) + L-glutamine + ATP + H2O = L-asparaginyl-tRNA(Asn) + L-glutamate + ADP + phosphate + 2 H(+). Functionally, allows the formation of correctly charged Asn-tRNA(Asn) or Gln-tRNA(Gln) through the transamidation of misacylated Asp-tRNA(Asn) or Glu-tRNA(Gln) in organisms which lack either or both of asparaginyl-tRNA or glutaminyl-tRNA synthetases. The reaction takes place in the presence of glutamine and ATP through an activated phospho-Asp-tRNA(Asn) or phospho-Glu-tRNA(Gln). In Streptococcus sanguinis (strain SK36), this protein is Aspartyl/glutamyl-tRNA(Asn/Gln) amidotransferase subunit B.